The primary structure comprises 431 residues: Selenocysteine lyase (431 aa).

Lys239 is modified (N6-(pyridoxal phosphate)lysine). Cys367 acts as the S-selanylcysteine intermediate in catalysis.

This sequence belongs to the class-V pyridoxal-phosphate-dependent aminotransferase family. As to quaternary structure, homodimer. The cofactor is pyridoxal 5'-phosphate.

The protein resides in the cytoplasm. Its subcellular location is the cytosol. The enzyme catalyses L-selenocysteine + AH2 = hydrogenselenide + L-alanine + A + H(+). In terms of biological role, catalyzes the decomposition of L-selenocysteine to L-alanine and elemental selenium. The protein is Selenocysteine lyase (scly) of Xenopus tropicalis (Western clawed frog).